Consider the following 79-residue polypeptide: Antimicrobial peptide ToAP2 (79 aa).

Residues 1 to 23 (MQFKKQLLVIFFAYFLVVNESEA) form the signal peptide. The propeptide occupies 50–79 (SLMKRELKNLYDPYQRSVEMERLLKELPLY).

It belongs to the non-disulfide-bridged peptide (NDBP) superfamily. Medium-length antimicrobial peptide (group 3) family. In terms of tissue distribution, expressed by the venom gland.

Its subcellular location is the secreted. It localises to the target cell membrane. Antimicrobial peptide. Shows antibacterial activity against all M.massiliense bacterial strains tested. Has antifungal activity against Candida spp. and two Cryptococcus neoformans strains with MICs values ranging from 6.25 to 200 uM. Also shows an inhibitory activity on C.albicans biofilms at high concentrations. Exhibits chemotactic activity for monocytes, neutrophils, and eosinophils. Shows low cytotoxic activity and has weak hemolytic activity on human erythrocytes. In vivo, treatment of infected mice with M.massiliense reduces the bacterial load in the liver, lung, and spleen. May act by disrupting the integrity of the bacterial cell membrane. This is Antimicrobial peptide ToAP2 from Tityus obscurus (Amazonian scorpion).